Reading from the N-terminus, the 130-residue chain is Small ribosomal subunit protein uS11 (130 aa).

This sequence belongs to the universal ribosomal protein uS11 family. As to quaternary structure, part of the 30S ribosomal subunit. Interacts with proteins S7 and S18. Binds to IF-3.

Located on the platform of the 30S subunit, it bridges several disparate RNA helices of the 16S rRNA. Forms part of the Shine-Dalgarno cleft in the 70S ribosome. In Nitratiruptor sp. (strain SB155-2), this protein is Small ribosomal subunit protein uS11.